A 497-amino-acid polypeptide reads, in one-letter code: Cytochrome P450 71A12 (497 aa).

A helical transmembrane segment spans residues 4–24 (ILMVSLCLTTLITLFLLKQFL). Cys439 is a binding site for heme.

It belongs to the cytochrome P450 family. Heme is required as a cofactor.

It localises to the membrane. Functionally, converts indole-3-acetaldoxime to indole cyanohydrin. Involved in the biosynthetic pathway to 4-hydroxyindole-3-carbonyl nitrile (4-OH-ICN), a cyanogenic metabolite required for inducible pathogen defense. This chain is Cytochrome P450 71A12 (CYP71A12), found in Arabidopsis thaliana (Mouse-ear cress).